We begin with the raw amino-acid sequence, 450 residues long: Phosphoglucosamine mutase (450 aa).

Ser-102 (phosphoserine intermediate) is an active-site residue. 4 residues coordinate Mg(2+): Ser-102, Asp-243, Asp-245, and Asp-247. A Phosphoserine modification is found at Ser-102.

Belongs to the phosphohexose mutase family. Requires Mg(2+) as cofactor. In terms of processing, activated by phosphorylation.

It carries out the reaction alpha-D-glucosamine 1-phosphate = D-glucosamine 6-phosphate. Functionally, catalyzes the conversion of glucosamine-6-phosphate to glucosamine-1-phosphate. The polypeptide is Phosphoglucosamine mutase (Allorhizobium ampelinum (strain ATCC BAA-846 / DSM 112012 / S4) (Agrobacterium vitis (strain S4))).